The chain runs to 920 residues: Valine--tRNA ligase (920 aa).

Residues 40 to 50 (PNVTGTLHMGH) carry the 'HIGH' region motif. A 'KMSKS' region motif is present at residues 522–526 (KMSKS). Residue lysine 525 coordinates ATP. 2 coiled-coil regions span residues 642–668 (EWIRTRLQQTIKNAEEALSQYRFDLLA) and 849–920 (AGVI…IESL).

This sequence belongs to the class-I aminoacyl-tRNA synthetase family. ValS type 1 subfamily. Monomer.

The protein resides in the cytoplasm. It catalyses the reaction tRNA(Val) + L-valine + ATP = L-valyl-tRNA(Val) + AMP + diphosphate. In terms of biological role, catalyzes the attachment of valine to tRNA(Val). As ValRS can inadvertently accommodate and process structurally similar amino acids such as threonine, to avoid such errors, it has a 'posttransfer' editing activity that hydrolyzes mischarged Thr-tRNA(Val) in a tRNA-dependent manner. In Coxiella burnetii (strain RSA 493 / Nine Mile phase I), this protein is Valine--tRNA ligase.